The chain runs to 206 residues: Thymidylate kinase (206 aa).

Residue 14 to 21 (GGEGIGKS) coordinates ATP.

This sequence belongs to the thymidylate kinase family.

It carries out the reaction dTMP + ATP = dTDP + ADP. Phosphorylation of dTMP to form dTDP in both de novo and salvage pathways of dTTP synthesis. The chain is Thymidylate kinase from Rickettsia bellii (strain OSU 85-389).